The chain runs to 577 residues: Sensor protein ChvG (577 aa).

Residues 1-29 (MRGQRRWAHPFTLIRRLFGNAVFSSLTRR) are Cytoplasmic-facing. The chain crosses the membrane as a helical span at residues 30-50 (IVFFNLVALVVLVGGIMYLNQ). Over 51–260 (FREGLIDARV…DIDKIVHAER (210 aa)) the chain is Periplasmic. Residues 261-281 (LAIIRVFGVAALVNVILSLLL) traverse the membrane as a helical segment. The Cytoplasmic segment spans residues 282–577 (SSTIANPLRR…VLSLPAGPHP (296 aa)). In terms of domain architecture, HAMP spans 283–339 (STIANPLRRLSAAAIRVRRGGAKEREEIPDFSSRQDEIGNLSVALREMTTALYDRIA). The region spanning 347–575 (DVSHELKNPL…RFVLSLPAGP (229 aa)) is the Histidine kinase domain. Phosphohistidine is present on H350.

In terms of assembly, homodimer.

The protein localises to the cell inner membrane. It carries out the reaction ATP + protein L-histidine = ADP + protein N-phospho-L-histidine.. It functions in the pathway glycan metabolism; exopolysaccharide biosynthesis. Functionally, member of a two-component regulatory system ChvG(ExoS)/ChvI involved in regulating the production of succinoglycan. Activates ChvI by phosphorylation. In Rhizobium meliloti (strain 1021) (Ensifer meliloti), this protein is Sensor protein ChvG (chvG).